A 392-amino-acid chain; its full sequence is Na(+)/H(+) antiporter NhaA (392 aa).

11 helical membrane passes run Ala-14 to Leu-34, Leu-59 to Val-79, Ile-95 to Phe-115, Gly-125 to Gly-145, Val-154 to Phe-174, Val-179 to Trp-199, Leu-213 to Val-233, Gly-254 to Val-274, Leu-287 to Phe-307, Ile-328 to Leu-348, and Leu-363 to Ala-383.

The protein belongs to the NhaA Na(+)/H(+) (TC 2.A.33) antiporter family.

It localises to the cell inner membrane. The enzyme catalyses Na(+)(in) + 2 H(+)(out) = Na(+)(out) + 2 H(+)(in). Its function is as follows. Na(+)/H(+) antiporter that extrudes sodium in exchange for external protons. This Yersinia enterocolitica serotype O:8 / biotype 1B (strain NCTC 13174 / 8081) protein is Na(+)/H(+) antiporter NhaA.